The chain runs to 324 residues: Quinolinate synthase (324 aa).

His39 and Ser56 together coordinate iminosuccinate. Residue Cys101 participates in [4Fe-4S] cluster binding. Iminosuccinate is bound by residues 127–129 (YIN) and Ser144. A [4Fe-4S] cluster-binding site is contributed by Cys187. Iminosuccinate is bound by residues 213 to 215 (HPE) and Thr230. Position 280 (Cys280) interacts with [4Fe-4S] cluster.

Belongs to the quinolinate synthase family. Type 2 subfamily. [4Fe-4S] cluster serves as cofactor.

Its subcellular location is the cytoplasm. The enzyme catalyses iminosuccinate + dihydroxyacetone phosphate = quinolinate + phosphate + 2 H2O + H(+). Its pathway is cofactor biosynthesis; NAD(+) biosynthesis; quinolinate from iminoaspartate: step 1/1. Catalyzes the condensation of iminoaspartate with dihydroxyacetone phosphate to form quinolinate. This Nostoc sp. (strain PCC 7120 / SAG 25.82 / UTEX 2576) protein is Quinolinate synthase.